We begin with the raw amino-acid sequence, 280 residues long: Mitochondrial outer membrane protein porin 2 (280 aa).

This sequence belongs to the eukaryotic mitochondrial porin (TC 1.B.8.1) family. As to expression, expressed in roots, stems, leaves, palea, lemma and pollen.

The protein localises to the mitochondrion outer membrane. Functionally, forms a channel through the mitochondrial outer membrane that allows diffusion of small hydrophilic molecules. The channel adopts an open conformation at low or zero membrane potential and a closed conformation at potentials above 30-40 mV. The open state has a weak anion selectivity whereas the closed state is cation-selective. This Oryza sativa subsp. japonica (Rice) protein is Mitochondrial outer membrane protein porin 2 (VDAC2).